Reading from the N-terminus, the 203-residue chain is uncharacterized protein (203 aa).

Disordered regions lie at residues 65–84 (LSLS…SFDS) and 92–170 (SSSS…ETAL). Acidic residues-rich tracts occupy residues 68 to 82 (SEDE…EDSF) and 98 to 110 (SEEE…EESL). Over residues 111–122 (DSSFLVSASLSL) the composition is skewed to low complexity. The span at 123–168 (SEDDEEEDSESEDEDEDEDSDSDSDSDSDSDEDEDEDEDSEEEEET) shows a compositional bias: acidic residues. A helical transmembrane segment spans residues 182–202 (TSFLLPFTLVVLAILFYPAWV).

The protein resides in the membrane. This is an uncharacterized protein from Saccharomyces cerevisiae (strain ATCC 204508 / S288c) (Baker's yeast).